The sequence spans 65 residues: Stress-associated endoplasmic reticulum protein 2 (65 aa).

The chain crosses the membrane as a helical span at residues 38–58; sequence GPWLLALFVFVVCGSAIFQII.

The protein belongs to the RAMP4 family. In terms of assembly, interacts with SEC61B, SEC61A1 and the SEC61 complex. Interacts with CANX.

Its subcellular location is the membrane. It is found in the endoplasmic reticulum membrane. Its function is as follows. Interacts with target proteins during their translocation into the lumen of the endoplasmic reticulum. Protects unfolded target proteins against degradation during ER stress. May facilitate glycosylation of target proteins after termination of ER stress. May modulate the use of N-glycosylation sites on target proteins. The protein is Stress-associated endoplasmic reticulum protein 2 (SERP2) of Bos taurus (Bovine).